A 734-amino-acid polypeptide reads, in one-letter code: Photosystem I P700 chlorophyll a apoprotein A2 (734 aa).

8 consecutive transmembrane segments (helical) span residues 46–69 (IFAS…FHVA), 135–158 (LYTG…LHLE), 175–199 (LNHH…HVAI), 273–291 (IAHH…GHTY), 330–353 (LHFQ…QHMY), 369–395 (AALY…IFLT), 417–439 (AIIS…LYVH), and 517–535 (FPVH…LILS). [4Fe-4S] cluster contacts are provided by cysteine 559 and cysteine 568. The next 2 helical transmembrane spans lie at 575 to 596 (AFYP…HWHW) and 643 to 665 (LSVW…MFLI). Positions 654, 662, and 670 each coordinate chlorophyll a. Tryptophan 671 is a phylloquinone binding site. A helical membrane pass occupies residues 707–727 (LVGLAHFSVGYIFTYAAFPIP).

The protein belongs to the PsaA/PsaB family. In terms of assembly, the PsaA/B heterodimer binds the P700 chlorophyll special pair and subsequent electron acceptors. PSI consists of a core antenna complex that captures photons, and an electron transfer chain that converts photonic excitation into a charge separation. The eukaryotic PSI reaction center is composed of at least 11 subunits. P700 is a chlorophyll a/chlorophyll a' dimer, A0 is one or more chlorophyll a, A1 is one or both phylloquinones and FX is a shared 4Fe-4S iron-sulfur center. is required as a cofactor.

It is found in the plastid. The protein localises to the chloroplast thylakoid membrane. The catalysed reaction is reduced [plastocyanin] + hnu + oxidized [2Fe-2S]-[ferredoxin] = oxidized [plastocyanin] + reduced [2Fe-2S]-[ferredoxin]. Functionally, psaA and PsaB bind P700, the primary electron donor of photosystem I (PSI), as well as the electron acceptors A0, A1 and FX. PSI is a plastocyanin-ferredoxin oxidoreductase, converting photonic excitation into a charge separation, which transfers an electron from the donor P700 chlorophyll pair to the spectroscopically characterized acceptors A0, A1, FX, FA and FB in turn. Oxidized P700 is reduced on the lumenal side of the thylakoid membrane by plastocyanin. The chain is Photosystem I P700 chlorophyll a apoprotein A2 from Selaginella uncinata (Blue spike-moss).